The primary structure comprises 189 residues: Phomopsin biosynthesis cluster protein D (189 aa).

This sequence belongs to the oryJ family.

Part of the gene cluster that mediates the biosynthesis of the phomopsins, a group of hexapeptide mycotoxins which infects lupins and causes lupinosis disease in livestock. The role of phomC within the phomopsins biosynthesis pathway has still to be determined. The pathway starts with the processing of the precursor phomA by several endopeptidases including kexin proteases as well as the cluster-specific S41 family peptidase phomP1 and the oligopeptidase phomG to produce 10 identical copies of the hexapeptide Tyr-Val-Ile-Pro-Ile-Asp. After being excised from the precursor peptide, the core peptides are cyclized and modified post-translationally by enzymes encoded within the gene cluster. The timing and order of proteolysis of the phomA precursor and PTMs are still unknown. Two tyrosinase-like enzymes, phomQ1 and phomQ2, catalyze the chlorination and hydroxylation of Tyr, respectively. PhomYb, is proposed to be involved in the construction of the macrocyclic structure. The other 4 ustYa family proteins may be involved in PTMs that generate the unique structure of phomopsin A. PhomYa is required for the hydroxylation of C-beta of Tyr. PhomYc, phomYd, and phomYe are responsible for the biosynthesis of 2,3-dehydroisoleucine (dIle), 2,3-dehydroaspartic acid (dAsp), and 3,4-dehydroproline (dPro), respectively. While dIle formation by phomYc is indispensable for the installation of dAsp by phomYd, the order of the other PTMs have not been elucidated yet. Most of the biosynthetic enzymes likely have broad substrate specificity, and thus, there might be a metabolic grid from a precursor to phomopsin A. The enzyme(s) responsible for the biosynthesis of 3,4-dehydrovaline (dVal) have also not been identified yet. Finally, phomM acts as an S-adenosylmethionine-dependent alpha-N-methyltransferase that catalyzes two successive N-methylation reactions, converting N-desmethyl-phomopsin A to phomopsin A and phomopsin A further to an N,N-dimethylated congener called phomopsin E. This is Phomopsin biosynthesis cluster protein D from Diaporthe leptostromiformis (Lupinosis disease fungus).